A 958-amino-acid chain; its full sequence is UPF0182 protein TW644 (958 aa).

7 consecutive transmembrane segments (helical) span residues 14 to 34, 59 to 79, 107 to 127, 166 to 186, 205 to 225, 249 to 269, and 280 to 300; these read IAIL…FFLV, IFVV…LCMF, KIVV…FAAS, LFFL…ISVV, VQYA…FWLN, LIPG…LFCI, and IIGV…LPWG.

It belongs to the UPF0182 family.

It is found in the cell membrane. The chain is UPF0182 protein TW644 from Tropheryma whipplei (strain TW08/27) (Whipple's bacillus).